Reading from the N-terminus, the 89-residue chain is Protein S100-A8 (89 aa).

EF-hand domains follow at residues 13–48 (IDVYHNYSNIQGNHHALYKNDFKKMVTTECPQFVQN) and 46–81 (VQNINIENLFRELDINSDNAINFEEFLAMVIKVGVA). Zn(2+)-binding residues include His17 and His27. Asp33 is a binding site for Ca(2+). Cys42 is subject to S-nitrosocysteine. Positions 59, 61, 63, and 70 each coordinate Ca(2+). His83 contacts Zn(2+).

This sequence belongs to the S-100 family. As to quaternary structure, homodimer. Preferentially exists as a heterodimer or heterotetramer with S100A9 known as calprotectin (S100A8/A9). Calprotectin (S100A8/9) interacts with CEACAM3 and tubulin filaments in a calcium-dependent manner. Heterotetrameric calprotectin (S100A8/A9) interacts with ANXA6 and associates with tubulin filaments in activated monocytes. S100A8 and calprotectin (S100A8/9) interact with NCF2/P67PHOX, RAC1 and RAC2. Calprotectin (S100A8/9) interacts with CYBA and CYBB. S100A8 interacts with AGER, ATP2A2 and with the heterodimeric complex formed by TLR4 and LY96. Calprotectin (S100A8/9) interacts with NOS2 to form the iNOS-S100A8/A9 transnitrosylase complex. Calprotectin (S100A8/9) interacts with CD69.

It localises to the secreted. The protein localises to the cytoplasm. It is found in the cytoskeleton. Its subcellular location is the cell membrane. Calprotectin (S100A8/A9) activity on TLR4 signaling is inhibited by paquinimod. S100A8 is a calcium- and zinc-binding protein which plays a prominent role in the regulation of inflammatory processes and immune response. It can induce neutrophil chemotaxis and adhesion. Predominantly found as calprotectin (S100A8/A9) which has a wide plethora of intra- and extracellular functions. The intracellular functions include: facilitating leukocyte arachidonic acid trafficking and metabolism, modulation of the tubulin-dependent cytoskeleton during migration of phagocytes and activation of the neutrophilic NADPH-oxidase. Also participates in regulatory T-cell differentiation together with CD69. Activates NADPH-oxidase by facilitating the enzyme complex assembly at the cell membrane, transferring arachidonic acid, an essential cofactor, to the enzyme complex and S100A8 contributes to the enzyme assembly by directly binding to NCF2/P67PHOX. The extracellular functions involve pro-inflammatory, antimicrobial, oxidant-scavenging and apoptosis-inducing activities. Its pro-inflammatory activity includes recruitment of leukocytes, promotion of cytokine and chemokine production, and regulation of leukocyte adhesion and migration. Acts as an alarmin or a danger associated molecular pattern (DAMP) molecule and stimulates innate immune cells via binding to pattern recognition receptors such as Toll-like receptor 4 (TLR4) and receptor for advanced glycation endproducts (AGER). Binding to TLR4 and AGER activates the MAP-kinase and NF-kappa-B signaling pathways resulting in the amplification of the pro-inflammatory cascade. Has antimicrobial activity towards bacteria and fungi and exerts its antimicrobial activity probably via chelation of Zn(2+) which is essential for microbial growth. Can induce cell death via autophagy and apoptosis and this occurs through the cross-talk of mitochondria and lysosomes via reactive oxygen species (ROS) and the process involves BNIP3. Can regulate neutrophil number and apoptosis by an anti-apoptotic effect; regulates cell survival via ITGAM/ITGB and TLR4 and a signaling mechanism involving MEK-ERK. Its role as an oxidant scavenger has a protective role in preventing exaggerated tissue damage by scavenging oxidants. The iNOS-S100A8/A9 transnitrosylase complex is proposed to direct selective inflammatory stimulus-dependent S-nitrosylation of multiple targets such as GAPDH, ANXA5, EZR, MSN and VIM by recognizing a [IL]-x-C-x-x-[DE] motif; S100A8 seems to contribute to S-nitrosylation site selectivity. Functionally, (Microbial infection) Upon infection by murine coronavirus (MHV-A59), induces expansion of aberrant immature neutrophils in a TLR4-dependent manner. This chain is Protein S100-A8, found in Mus musculus (Mouse).